Here is a 227-residue protein sequence, read N- to C-terminus: MEISYHGHSIVKIQTNGKTILIDPFINGNGQTDLKVAEEAPDIILLTHGHNDHVGDTIELAKKKDALVIAPNELANWISWQGVKTHPMHIGGAKEFDFGKVKFTQAFHGSSYVTDTKEIIYMGMPAGILLFVEGLTIYHAGDTALFSDMKLIGERHPIDIAFLPIGDNFTMGPEDAACAVSFLQPKIVVPIHYNTFPPIEQDPQIFADLVQNSEVQILKAGEKVNCF.

This sequence belongs to the UPF0173 family.

The polypeptide is UPF0173 metal-dependent hydrolase Bsph_4138 (Lysinibacillus sphaericus (strain C3-41)).